A 513-amino-acid polypeptide reads, in one-letter code: Maturase K (513 aa).

This sequence belongs to the intron maturase 2 family. MatK subfamily.

The protein localises to the plastid. The protein resides in the chloroplast. In terms of biological role, usually encoded in the trnK tRNA gene intron. Probably assists in splicing its own and other chloroplast group II introns. The sequence is that of Maturase K from Phaseolus vulgaris (Kidney bean).